The following is a 159-amino-acid chain: Ribosomal RNA large subunit methyltransferase H (159 aa).

Residues Leu76, Gly108, and 127–132 (FGKLTL) each bind S-adenosyl-L-methionine.

Belongs to the RNA methyltransferase RlmH family. Homodimer.

The protein localises to the cytoplasm. It catalyses the reaction pseudouridine(1915) in 23S rRNA + S-adenosyl-L-methionine = N(3)-methylpseudouridine(1915) in 23S rRNA + S-adenosyl-L-homocysteine + H(+). Functionally, specifically methylates the pseudouridine at position 1915 (m3Psi1915) in 23S rRNA. This chain is Ribosomal RNA large subunit methyltransferase H, found in Streptococcus sanguinis (strain SK36).